The sequence spans 121 residues: Small ribosomal subunit protein uS13 (121 aa).

The segment at histidine 91 to lysine 121 is disordered.

Belongs to the universal ribosomal protein uS13 family. Part of the 30S ribosomal subunit. Forms a loose heterodimer with protein S19. Forms two bridges to the 50S subunit in the 70S ribosome.

Functionally, located at the top of the head of the 30S subunit, it contacts several helices of the 16S rRNA. In the 70S ribosome it contacts the 23S rRNA (bridge B1a) and protein L5 of the 50S subunit (bridge B1b), connecting the 2 subunits; these bridges are implicated in subunit movement. Contacts the tRNAs in the A and P-sites. This Staphylococcus epidermidis (strain ATCC 35984 / DSM 28319 / BCRC 17069 / CCUG 31568 / BM 3577 / RP62A) protein is Small ribosomal subunit protein uS13.